We begin with the raw amino-acid sequence, 751 residues long: MTITPPEQQVKRVRVAFVSNPVETSFEKWSRPGHFSRLLSKGPNTTTWIWNLHADAHDFDNHTTDLEDISRKVFSAHFGQLAIIEIWLSGMFFHGARFSNYEAWLLDPIHVKPSAQIVWPIVGQEILNGDVGGNFQGIQITSGLFQLWRSCGITSEFQLYITALTGLIFSAVLFFAGWFHYHKAAPKLEWFQNVESMLNHHLSGLLGLGCLSWAGHQIHVSLPINKLLDSGVNPAELPLPHDFILDKSLISQLYPSFSKGLAPFFTFHWSEYSDFLTFRGGLNNVTGGLWLTDVAHHHLALAVLFILAGHMYKTNWKIGHDIKGLLESHTGPFTGQGHKGLYEIFTNSWHAQLSLNLAMMGSLSIIVAQHMYSMPPYPYIAIDYGTELSLFTHHYWIGGFCIVGAAAHAAIFMVRDYDPALNFNNLLDRVLLHRDAIISHLNWVCIFLGLHSFGLYIHNDTLSALGRPQDMFSDSAIQLQPVFAQWIQNTHYLAPTLTAFNLVSPTTPVWGGDVVSISGKVAMMPIKLGTADFLVHHIHAFTIHVTVLILLKGVLFSRSSRLIPDKASLGFRFPCDGPGRGGTCQVSAWDHVFLGLFWMYNSISVAIFHFSWKMQSDVWGTVLANKVSHITGGNFSQGSLTINGWLRDFLWAQSSQVIQSYGSPLSAYGLMFLGAHFVWAFTLMFLFSGRGYWQELIESIVWAHNKLKVAPNIQPRALSITQGRAVGVAHYLLGGIATTWSFFLARIISVG.

Transmembrane regions (helical) follow at residues 73-96 (VFSAHFGQLAIIEIWLSGMFFHGA), 159-182 (LYITALTGLIFSAVLFFAGWFHYH), 198-222 (LNHHLSGLLGLGCLSWAGHQIHVSL), 294-312 (VAHHHLALAVLFILAGHMY), 349-372 (WHAQLSLNLAMMGSLSIIVAQHMY), 388-414 (LSLFTHHYWIGGFCIVGAAAHAAIFMV), 436-458 (AIISHLNWVCIFLGLHSFGLYIH), and 533-551 (FLVHHIHAFTIHVTVLILL). [4Fe-4S] cluster is bound by residues Cys575 and Cys584. Helical transmembrane passes span 591–612 (HVFLGLFWMYNSISVAIFHFSW) and 665–687 (LSAYGLMFLGAHFVWAFTLMFLF). His676 lines the chlorophyll a' pocket. Residues Met684 and Tyr692 each contribute to the chlorophyll a site. Phylloquinone is bound at residue Trp693. A helical membrane pass occupies residues 725-745 (AVGVAHYLLGGIATTWSFFLA).

The protein belongs to the PsaA/PsaB family. As to quaternary structure, the PsaA/B heterodimer binds the P700 chlorophyll special pair and subsequent electron acceptors. PSI consists of a core antenna complex that captures photons, and an electron transfer chain that converts photonic excitation into a charge separation. The eukaryotic PSI reaction center is composed of at least 11 subunits. Requires P700 is a chlorophyll a/chlorophyll a' dimer, A0 is one or more chlorophyll a, A1 is one or both phylloquinones and FX is a shared 4Fe-4S iron-sulfur center. as cofactor.

It localises to the plastid. The protein resides in the chloroplast thylakoid membrane. It carries out the reaction reduced [plastocyanin] + hnu + oxidized [2Fe-2S]-[ferredoxin] = oxidized [plastocyanin] + reduced [2Fe-2S]-[ferredoxin]. PsaA and PsaB bind P700, the primary electron donor of photosystem I (PSI), as well as the electron acceptors A0, A1 and FX. PSI is a plastocyanin/cytochrome c6-ferredoxin oxidoreductase, converting photonic excitation into a charge separation, which transfers an electron from the donor P700 chlorophyll pair to the spectroscopically characterized acceptors A0, A1, FX, FA and FB in turn. Oxidized P700 is reduced on the lumenal side of the thylakoid membrane by plastocyanin or cytochrome c6. The polypeptide is Photosystem I P700 chlorophyll a apoprotein A1 (Euglena gracilis).